The chain runs to 539 residues: Membrane protein insertase YidC (539 aa).

The chain crosses the membrane as a helical span at residues 6 to 26; the sequence is VILAVALSFAVLLGWQFLFPP. A disordered region spans residues 28–63; sequence PQQPAPAQQEQTAQPNQAVDSSVAGPVSNQLPDPAS. Low complexity predominate over residues 32–45; that stretch reads APAQQEQTAQPNQA. The span at 54–63 shows a compositional bias: polar residues; it reads VSNQLPDPAS. 3 helical membrane-spanning segments follow: residues 349–369, 421–441, and 496–516; these read YGIAIILLTIVIKILFWPLSH, MLLQIPVFFGLYKALMGTVAL, and IMMFLPLVFTFMFLNFPSGLV.

This sequence belongs to the OXA1/ALB3/YidC family. Type 1 subfamily. Interacts with the Sec translocase complex via SecD. Specifically interacts with transmembrane segments of nascent integral membrane proteins during membrane integration.

Its subcellular location is the cell inner membrane. Its function is as follows. Required for the insertion and/or proper folding and/or complex formation of integral membrane proteins into the membrane. Involved in integration of membrane proteins that insert both dependently and independently of the Sec translocase complex, as well as at least some lipoproteins. Aids folding of multispanning membrane proteins. The protein is Membrane protein insertase YidC of Maridesulfovibrio salexigens (strain ATCC 14822 / DSM 2638 / NCIMB 8403 / VKM B-1763) (Desulfovibrio salexigens).